The sequence spans 282 residues: Biotin synthase (282 aa).

A Radical SAM core domain is found at 1–228 (MQEIFLCSIS…NARLMVAGGR (228 aa)). [4Fe-4S] cluster-binding residues include Cys-17, Cys-21, and Cys-24. [2Fe-2S] cluster contacts are provided by Cys-61, Cys-96, Cys-154, and Arg-221.

This sequence belongs to the radical SAM superfamily. Biotin synthase family. In terms of assembly, homodimer. Requires [4Fe-4S] cluster as cofactor. [2Fe-2S] cluster serves as cofactor.

It catalyses the reaction (4R,5S)-dethiobiotin + (sulfur carrier)-SH + 2 reduced [2Fe-2S]-[ferredoxin] + 2 S-adenosyl-L-methionine = (sulfur carrier)-H + biotin + 2 5'-deoxyadenosine + 2 L-methionine + 2 oxidized [2Fe-2S]-[ferredoxin]. It participates in cofactor biosynthesis; biotin biosynthesis; biotin from 7,8-diaminononanoate: step 2/2. Its function is as follows. Catalyzes the conversion of dethiobiotin (DTB) to biotin by the insertion of a sulfur atom into dethiobiotin via a radical-based mechanism. This is Biotin synthase from Helicobacter pylori (strain J99 / ATCC 700824) (Campylobacter pylori J99).